We begin with the raw amino-acid sequence, 170 residues long: Adenine phosphoribosyltransferase (170 aa).

This sequence belongs to the purine/pyrimidine phosphoribosyltransferase family. Homodimer.

The protein localises to the cytoplasm. The catalysed reaction is AMP + diphosphate = 5-phospho-alpha-D-ribose 1-diphosphate + adenine. It functions in the pathway purine metabolism; AMP biosynthesis via salvage pathway; AMP from adenine: step 1/1. Catalyzes a salvage reaction resulting in the formation of AMP, that is energically less costly than de novo synthesis. In Enterococcus faecalis (strain ATCC 700802 / V583), this protein is Adenine phosphoribosyltransferase.